We begin with the raw amino-acid sequence, 79 residues long: Small ribosomal subunit protein uS17 (79 aa).

It belongs to the universal ribosomal protein uS17 family. Part of the 30S ribosomal subunit.

Its function is as follows. One of the primary rRNA binding proteins, it binds specifically to the 5'-end of 16S ribosomal RNA. The polypeptide is Small ribosomal subunit protein uS17 (Mesorhizobium japonicum (strain LMG 29417 / CECT 9101 / MAFF 303099) (Mesorhizobium loti (strain MAFF 303099))).